The chain runs to 483 residues: Cytochrome P450 monooxygenase stcF (483 aa).

C424 serves as a coordination point for heme.

Belongs to the cytochrome P450 family. It depends on heme as a cofactor.

Its pathway is mycotoxin biosynthesis; sterigmatocystin biosynthesis. In terms of biological role, cytochrome P450 monooxygenase; part of the gene cluster that mediates the biosynthesis of sterigmatocystin (ST), a polyketide-derived furanocoumarin which is part of the most toxic and carcinogenic compounds among the known mycotoxins. The first step in the biosynthesis of sterigmatocystin is the production of hexanoate by the fatty acid synthase (FAS) units stcJ and stcK. The polyketide backbone is assembled by the non-reducing polyketide synthase stcA by condensation of the starter hexanoyl-CoA and 7 malonyl-CoA extender units followed by cyclization and release of norsolorinic acid. Norsolorinic acid is the first stable intermediate in the biosynthesis of sterigmatocystin and is converted into averantin (AVN) by the ketoreductase stcE which reduces the hexanoate ketone to an alcohol. Averantin is then oxidized into 5'-hydroxyaverantin (HAVN) by the cytochrome P450 monooxygenase stcF. 5'-hydroxyaverantin is further converted to 5'-oxyaverantin (OAVN) by the 5'-hydroxyaverantin dehydrogenase stcG. The next step is the conversion of OAVN into averufin (AVF) which is catalyzed by a yet to be identified enzyme. The cytochrome P450 monooxygenase stcB and the flavin-binding monooxygenase stcW are both required for the conversion of averufin to 1-hydroxyversicolorone. The esterase stcI probably catalyzes the formation of versiconal hemiacetal acetate from 1-hydroxyversicolorone. The oxydoreductase stcN then probably catalyzes the biosynthetic step from versiconal to versicolorin B (VERB). The next step is performed by the versicolorin B desaturase stcL to produce versicolorin A (VERA). The ketoreductase stcU and the cytochrome P450 monooxygenase stcS are involved in the conversion of versicolorin A to demethylsterigmatocystin. The Baeyer-Villiger oxidas stcQ and the reductase stcR might be involved in the biosynthetic step from versicolorin A to demethylsterigmatocystin. The final step in the biosynthesis of sterigmatocystin is the methylation of demethylsterigmatocystin catalyzed by the methyltransferase stcP. This Emericella nidulans (strain FGSC A4 / ATCC 38163 / CBS 112.46 / NRRL 194 / M139) (Aspergillus nidulans) protein is Cytochrome P450 monooxygenase stcF.